Here is a 337-residue protein sequence, read N- to C-terminus: Follistatin (337 aa).

A signal peptide spans 1–22 (PGGVCLLLLLLCQFMEDRSAQA). The region spanning 23–96 (GNCWLRQAKN…TCENVDCGPG (74 aa)) is the TB domain. 18 disulfides stabilise this stretch: Cys-25/Cys-48, Cys-35/Cys-81, Cys-49/Cys-84, Cys-88/Cys-99, Cys-93/Cys-109, Cys-111/Cys-143, Cys-115/Cys-136, Cys-125/Cys-157, Cys-161/Cys-172, Cys-166/Cys-182, Cys-185/Cys-218, Cys-189/Cys-211, Cys-200/Cys-232, Cys-238/Cys-249, Cys-243/Cys-260, Cys-263/Cys-295, Cys-267/Cys-288, and Cys-277/Cys-309. The Follistatin-like 1 domain occupies 87–110 (TCENVDCGPGKKCRMNKKNKPRCV). One can recognise a Kazal-like 1 domain in the interval 105–159 (NKPRCVCAPDCSNITWKGPVCGLDGKTYRNECALLKARCKEQPELEVQYQGKCKK). Residue Asn-117 is glycosylated (N-linked (GlcNAc...) asparagine). Residues 160–183 (TCRDVFCPGSSTCVVDQTNNAYCV) enclose the Follistatin-like 2 domain. Positions 179–234 (NAYCVTCNRICPEPTSSEQYLCGNDGVTYPSACHLRKATCLLGRSIGLAYEGKCIK) constitute a Kazal-like 2 domain. The 25-residue stretch at 237-261 (SCEDIQCTGGKKCLWDFKVGRGRCS) folds into the Follistatin-like 3 domain. The Kazal-like 3 domain occupies 254–311 (KVGRGRCSLCGELCPESKSEEPVCASDNATYASECAMKEAACSSGVLLEVKHSGSCNS). The N-linked (GlcNAc...) asparagine glycan is linked to Asn-281. The interval 309–337 (CNSISEDTEDEEEDEDQDYSFPISSILEW) is disordered. Positions 314-326 (EDTEDEEEDEDQD) are enriched in acidic residues.

As to quaternary structure, monomer.

It is found in the secreted. In terms of biological role, binds directly to activin and functions as an activin antagonist. Specific inhibitor of the biosynthesis and secretion of pituitary follicle stimulating hormone (FSH). The chain is Follistatin from Ovis aries (Sheep).